The following is an 872-amino-acid chain: TATA box-binding protein-associated factor RNA polymerase I subunit B (872 aa).

The RRN7-type zinc-finger motif lies at 6–40; the sequence is ETMQLENMHCDVCEGTTFQEREGFYYCVECGTQKD. Positions 15, 18, 32, and 35 each coordinate Zn(2+). The segment at 41-72 is B-reader; sequence QIRAVDITAEDNFDDTAAGRYTARTIRQKKDT. The segment at 73-84 is B-linker; that stretch reads EKEDEDDITSWE. The N-terminal cyclin fold stretch occupies residues 85–312; the sequence is FYNYVLRGFL…LPGNVAAKGK (228 aa). The interval 187-206 is disordered; the sequence is DASGYRSHGGASESEGEQSL.

Belongs to the RRN7/TAF1B family.

It is found in the nucleus. It localises to the nucleolus. Its function is as follows. Component of RNA polymerase I core factor complex that acts as a GTF2B/TFIIB-like factor and plays a key role in multiple steps during transcription initiation such as pre-initiation complex (PIC) assembly and postpolymerase recruitment events in polymerase I (Pol I) transcription. Binds rDNA promoters and plays a role in Pol I recruitment. The chain is TATA box-binding protein-associated factor RNA polymerase I subunit B from Drosophila melanogaster (Fruit fly).